Here is a 392-residue protein sequence, read N- to C-terminus: Heat-inducible transcription repressor HrcA (392 aa).

The protein belongs to the HrcA family.

Its function is as follows. Negative regulator of class I heat shock genes (grpE-dnaK-dnaJ and groELS operons). Prevents heat-shock induction of these operons. This is Heat-inducible transcription repressor HrcA from Chlamydia muridarum (strain MoPn / Nigg).